The chain runs to 214 residues: MVREPVKIQGTKEGLVIVVDEDVDIEVLKERIVDRIEKSLKFFEGATLNVRVKNSKFKDEELEDLKDFILKNYGVEIFIKKFQEKHIKNVTDDEIFNGLEEGITKFHRGTVRSGQVVKYYGNLVIIGDVNPGGLVQAAGNIVVTGTLRGIAHAGFTGNKEAFIVASSLKAMQLRIANIISRAPDKEEEVEYPEIAVVRKNKIIVRPLYHLSDLW.

This sequence belongs to the MinC family. Interacts with MinD and FtsZ.

Functionally, cell division inhibitor that blocks the formation of polar Z ring septums. Rapidly oscillates between the poles of the cell to destabilize FtsZ filaments that have formed before they mature into polar Z rings. Prevents FtsZ polymerization. In Caldanaerobacter subterraneus subsp. tengcongensis (strain DSM 15242 / JCM 11007 / NBRC 100824 / MB4) (Thermoanaerobacter tengcongensis), this protein is Probable septum site-determining protein MinC.